The following is a 214-amino-acid chain: Rhodanese-like domain-containing protein 10 (214 aa).

One can recognise a Rhodanese domain in the interval 58–182 (ASEGYILLDV…VSEGDFPEIE (125 aa)). The active-site Cysteine persulfide intermediate is the Cys142. A helical transmembrane segment spans residues 190–206 (ATIGGVSFYLLKLLVLL).

The protein resides in the membrane. The polypeptide is Rhodanese-like domain-containing protein 10 (STR10) (Arabidopsis thaliana (Mouse-ear cress)).